Here is a 207-residue protein sequence, read N- to C-terminus: Small ribosomal subunit protein uS4 (207 aa).

A disordered region spans residues 31–55 (KCKLDSKPGQHGRTSGARTSDYGTQ). A compositionally biased stretch (polar residues) spans 42 to 53 (GRTSGARTSDYG). Residues 97–160 (SRLDNVVYRM…KKQARIVEAL (64 aa)) form the S4 RNA-binding domain.

The protein belongs to the universal ribosomal protein uS4 family. As to quaternary structure, part of the 30S ribosomal subunit. Contacts protein S5. The interaction surface between S4 and S5 is involved in control of translational fidelity.

In terms of biological role, one of the primary rRNA binding proteins, it binds directly to 16S rRNA where it nucleates assembly of the body of the 30S subunit. Functionally, with S5 and S12 plays an important role in translational accuracy. The chain is Small ribosomal subunit protein uS4 from Burkholderia lata (strain ATCC 17760 / DSM 23089 / LMG 22485 / NCIMB 9086 / R18194 / 383).